We begin with the raw amino-acid sequence, 485 residues long: Cysteine--tRNA ligase (485 aa).

Residue cysteine 28 coordinates Zn(2+). Residues 30–40 (MTVYDLCHVGH) carry the 'HIGH' region motif. Positions 209, 234, and 238 each coordinate Zn(2+). A 'KMSKS' region motif is present at residues 266-270 (KMSKS). Lysine 269 provides a ligand contact to ATP.

It belongs to the class-I aminoacyl-tRNA synthetase family. In terms of assembly, monomer. Zn(2+) serves as cofactor.

It is found in the cytoplasm. The catalysed reaction is tRNA(Cys) + L-cysteine + ATP = L-cysteinyl-tRNA(Cys) + AMP + diphosphate. This Nitrosococcus oceani (strain ATCC 19707 / BCRC 17464 / JCM 30415 / NCIMB 11848 / C-107) protein is Cysteine--tRNA ligase.